The sequence spans 220 residues: Small ribosomal subunit protein eS1 (220 aa).

Belongs to the eukaryotic ribosomal protein eS1 family.

In Pyrobaculum arsenaticum (strain DSM 13514 / JCM 11321 / PZ6), this protein is Small ribosomal subunit protein eS1.